The following is a 104-amino-acid chain: Putative thioredoxin-4 (104 aa).

The region spanning 2-104 is the Thioredoxin domain; it reads SKVTNVSINT…QLRKILDSMK (103 aa). Active-site nucleophile residues include C31 and C34. C31 and C34 are disulfide-bonded.

Belongs to the thioredoxin family.

Functionally, participates in various redox reactions through the reversible oxidation of its active center dithiol to a disulfide and catalyzes dithiol-disulfide exchange reactions. The protein is Putative thioredoxin-4 (trxD) of Dictyostelium discoideum (Social amoeba).